A 305-amino-acid polypeptide reads, in one-letter code: MSKIPVIVIVGPTAVGKTSLSIELAKKLDGEIISGDSMQVYRGLDIGTAKITPEEMDEIKHYLIDVTDPSEPFTAAKFQTETRKWIETIHQAGKLPIIVGGTGLYIQSVFYDYDFGNVSEDKAYRAELEQLNKTLLWQMLEQQDPESAAQIHENNKRRVIRALEVMHLTGKPFSEYQVHNVLNDTYKPLFLGLDLDRALLYERINQRVNLMFEEGLVTEAKKLYDQHLVDVPAVCGIGYKELFPYFEGKSSLEEAKELIQKNSRHFAKRQLTWFRNRMEIDWIQAGVSTTEAEALNKAETFLSVK.

Position 11–18 (11–18 (GPTAVGKT)) interacts with ATP. Residue 13 to 18 (TAVGKT) participates in substrate binding. The segment at 36-39 (DSMQ) is interaction with substrate tRNA.

The protein belongs to the IPP transferase family. In terms of assembly, monomer. Mg(2+) is required as a cofactor.

The catalysed reaction is adenosine(37) in tRNA + dimethylallyl diphosphate = N(6)-dimethylallyladenosine(37) in tRNA + diphosphate. Its function is as follows. Catalyzes the transfer of a dimethylallyl group onto the adenine at position 37 in tRNAs that read codons beginning with uridine, leading to the formation of N6-(dimethylallyl)adenosine (i(6)A). The polypeptide is tRNA dimethylallyltransferase (Listeria monocytogenes serovar 1/2a (strain ATCC BAA-679 / EGD-e)).